The chain runs to 295 residues: 4-hydroxy-tetrahydrodipicolinate synthase (295 aa).

Position 47 (Thr47) interacts with pyruvate. Catalysis depends on Tyr135, which acts as the Proton donor/acceptor. Lys163 (schiff-base intermediate with substrate) is an active-site residue. Residue Ile206 participates in pyruvate binding.

Belongs to the DapA family. In terms of assembly, homodimer.

The protein resides in the cytoplasm. It carries out the reaction L-aspartate 4-semialdehyde + pyruvate = (2S,4S)-4-hydroxy-2,3,4,5-tetrahydrodipicolinate + H2O + H(+). Its pathway is amino-acid biosynthesis; L-lysine biosynthesis via DAP pathway; (S)-tetrahydrodipicolinate from L-aspartate: step 3/4. In terms of biological role, catalyzes the condensation of (S)-aspartate-beta-semialdehyde [(S)-ASA] and pyruvate to 4-hydroxy-tetrahydrodipicolinate (HTPA). The protein is 4-hydroxy-tetrahydrodipicolinate synthase of Staphylococcus aureus (strain bovine RF122 / ET3-1).